We begin with the raw amino-acid sequence, 126 residues long: Acyl carrier protein 2, mitochondrial (126 aa).

Residues 1 to 36 constitute a mitochondrion transit peptide; it reads MAARGAMLRYLRVNVNPTIQNPRECVLPFSILLRRF. A Carrier domain is found at 48-123; that stretch reads SEVTDRVLSV…LAVDFIASHP (76 aa). Ser-83 is subject to O-(pantetheine 4'-phosphoryl)serine.

Belongs to the acyl carrier protein (ACP) family. As to quaternary structure, complex I is composed of at least 49 different subunits. 4'-phosphopantetheine is transferred from CoA to a specific serine of the apo-ACP-like protein.

The protein localises to the mitochondrion. Its pathway is lipid metabolism; fatty acid biosynthesis. Functionally, carrier of the growing fatty acid chain in fatty acid biosynthesis. May be involved in the synthesis of short and medium chain fatty acids. Accessory and non-catalytic subunit of the mitochondrial membrane respiratory chain NADH dehydrogenase (Complex I), which functions in the transfer of electrons from NADH to the respiratory chain. This chain is Acyl carrier protein 2, mitochondrial (MTACP2), found in Arabidopsis thaliana (Mouse-ear cress).